The chain runs to 158 residues: Acetolactate synthase small subunit (158 aa).

Positions Ile-4 to Gln-78 constitute an ACT domain.

It belongs to the acetolactate synthase small subunit family. In terms of assembly, dimer of large and small chains.

It catalyses the reaction 2 pyruvate + H(+) = (2S)-2-acetolactate + CO2. The protein operates within amino-acid biosynthesis; L-isoleucine biosynthesis; L-isoleucine from 2-oxobutanoate: step 1/4. Its pathway is amino-acid biosynthesis; L-valine biosynthesis; L-valine from pyruvate: step 1/4. In Buchnera aphidicola subsp. Schizaphis graminum (strain Sg), this protein is Acetolactate synthase small subunit (ilvH).